A 360-amino-acid chain; its full sequence is MFEKGYVDENYIRVPKDRLFSFIVRVLTKLGVPEEDAKIVADNLVMADLRGVESHGVQRLKRYVDGIISGGVNLHPKIRVIREGPSYALIDGDEGLGQVVGYRSMKLAIKKAKDTGIGIVIARNSNHYGIAGYYALMAAEEGMIGISMTNSRPLVAPTGGIERILGTNPIALAAPTKDKPFLLDMATSVVPIGKLEVYRRKGKDIPEGWAINREGNITTKVEEVFNGGALLPLGGFGELLGGHKGYGLSLMVDILSGILSGGTWSKYVKNTSEKGSNVCHFFMVIDIEHFIPLEEFKEKISQMIEEIKSSRKHPEFERIWIHGEKGFLTMETRLKLGIPIYRKVLEELNEIAKRVGVEGL.

It belongs to the LDH2/MDH2 oxidoreductase family. In terms of assembly, homodimer.

It localises to the cytoplasm. It catalyses the reaction (S)-malate + NAD(+) = oxaloacetate + NADH + H(+). This is Malate dehydrogenase (mdh) from Pyrococcus horikoshii (strain ATCC 700860 / DSM 12428 / JCM 9974 / NBRC 100139 / OT-3).